An 89-amino-acid polypeptide reads, in one-letter code: Small ribosomal subunit protein uS15 (89 aa).

It belongs to the universal ribosomal protein uS15 family. As to quaternary structure, part of the 30S ribosomal subunit. Forms a bridge to the 50S subunit in the 70S ribosome, contacting the 23S rRNA.

In terms of biological role, one of the primary rRNA binding proteins, it binds directly to 16S rRNA where it helps nucleate assembly of the platform of the 30S subunit by binding and bridging several RNA helices of the 16S rRNA. Forms an intersubunit bridge (bridge B4) with the 23S rRNA of the 50S subunit in the ribosome. This Roseiflexus sp. (strain RS-1) protein is Small ribosomal subunit protein uS15.